The following is a 156-amino-acid chain: 3-dehydroquinate dehydratase (156 aa).

Tyrosine 31 functions as the Proton acceptor in the catalytic mechanism. Substrate contacts are provided by asparagine 83, histidine 89, and aspartate 96. Residue histidine 109 is the Proton donor of the active site. Substrate is bound by residues leucine 110–serine 111 and arginine 120.

The protein belongs to the type-II 3-dehydroquinase family. In terms of assembly, homododecamer.

It carries out the reaction 3-dehydroquinate = 3-dehydroshikimate + H2O. It participates in metabolic intermediate biosynthesis; chorismate biosynthesis; chorismate from D-erythrose 4-phosphate and phosphoenolpyruvate: step 3/7. Catalyzes a trans-dehydration via an enolate intermediate. This is 3-dehydroquinate dehydratase from Chromobacterium violaceum (strain ATCC 12472 / DSM 30191 / JCM 1249 / CCUG 213 / NBRC 12614 / NCIMB 9131 / NCTC 9757 / MK).